A 234-amino-acid chain; its full sequence is Phosphoribosylaminoimidazole-succinocarboxamide synthase (234 aa).

Belongs to the SAICAR synthetase family.

It carries out the reaction 5-amino-1-(5-phospho-D-ribosyl)imidazole-4-carboxylate + L-aspartate + ATP = (2S)-2-[5-amino-1-(5-phospho-beta-D-ribosyl)imidazole-4-carboxamido]succinate + ADP + phosphate + 2 H(+). The protein operates within purine metabolism; IMP biosynthesis via de novo pathway; 5-amino-1-(5-phospho-D-ribosyl)imidazole-4-carboxamide from 5-amino-1-(5-phospho-D-ribosyl)imidazole-4-carboxylate: step 1/2. The chain is Phosphoribosylaminoimidazole-succinocarboxamide synthase from Streptococcus pyogenes serotype M18 (strain MGAS8232).